The sequence spans 371 residues: DNA repair protein RAD14 (371 aa).

A disordered region spans residues 26–48 (LSSDQLNRIESRNEPLKTRPLAV). Over residues 32–42 (NRIESRNEPLK) the composition is skewed to basic and acidic residues. The Zn(2+) site is built by C191, C194, C213, and C216. Residues 191 to 216 (CIECHINIEMDPVLHDVFKLQVCKQC) fold into a zinc finger.

The protein belongs to the XPA family. Two monomers bind to kinked/damaged DNA (construct with only the C-terminal DNA-binding domain). Component of the nucleotide excision repair factor 1 (NEF1) complex consisting of RAD1, RAD10 and RAD14.

It localises to the nucleus. Involved in nucleotide excision repair. Binds specifically to damaged DNA. Required for the incision step. This is DNA repair protein RAD14 (RAD14) from Saccharomyces cerevisiae (strain ATCC 204508 / S288c) (Baker's yeast).